Reading from the N-terminus, the 305-residue chain is uncharacterized protein (305 aa).

The signal sequence occupies residues 1 to 29 (MSKAVSEILGYMYIFGIVMAVLAIVFVQV).

This is an uncharacterized protein from Archaeoglobus fulgidus (strain ATCC 49558 / DSM 4304 / JCM 9628 / NBRC 100126 / VC-16).